The chain runs to 956 residues: Transient receptor potential channel pyrexia (956 aa).

Over 1 to 491 (MENVRFSIIE…LFLKWRRIRK (491 aa)) the chain is Cytoplasmic. ANK repeat units follow at residues 132–161 (RGRT…DPNR), 166–195 (KEVT…SINI), 198–227 (EKRS…DPNT), 231–260 (YTET…DVRS), 265–294 (GKVT…EVDC), 298–327 (SHQT…NVNA), 331–362 (DGRT…DVNK), and 366–395 (YGYT…DITA). Residues 492 to 512 (FFLMSLAYHTLFVILFTFYVI) form a helical membrane-spanning segment. Residues 513–525 (WVYVRCCKKEELC) lie on the Extracellular side of the membrane. The helical transmembrane segment at 526–546 (VAPGYVSTIGYLVIILNLILL) threads the bilayer. Residues 547 to 565 (GKEVFQMAHGLRGYAKYWE) lie on the Cytoplasmic side of the membrane. Residues 566 to 584 (NWLQWTIGTGVLLCVTPET) form a helical membrane-spanning segment. Topologically, residues 585-601 (VRTDDLTAVPVWQHHVA) are extracellular. The chain crosses the membrane as a helical span at residues 602 to 622 (AIVILLVWLELMMLVGRFPIF). The Cytoplasmic segment spans residues 623-638 (GVYVQMFTKVAVNFAK). A helical transmembrane segment spans residues 639-659 (FLLAYICLLVAFGLSFAVLFN). Residues 660 to 701 (DYPAFENITWSFLKSITMMSGELEFEDIFYGDYAVKFPVTAH) are Extracellular-facing. Residue Asn-666 is glycosylated (N-linked (GlcNAc...) asparagine). A helical membrane pass occupies residues 702-722 (IIFLSFVLLVTVILTNLMVGL). Over 723–956 (AVSDIQGLQV…VASSHIRRHR (234 aa)) the chain is Cytoplasmic.

Belongs to the transient receptor (TC 1.A.4) family. STrpC subfamily. As to quaternary structure, homooligomer; between isoform A and isoform B. As to expression, expressed in various peripheral nerves and the central nerves in embryos. In adults, it is expressed in sensory neurons lying beneath the bristles around eyes, neurons innervating the bristles on the back of thorax and neurons in maxillary palps, proboscis and antennae. Expressed in multidendritic neurons, which mediate temperature sensing, as well as non-multidendritic neurons in larval epidermis. Localizes ubiquitously throughout neurites.

It localises to the membrane. In terms of biological role, receptor-activated non-selective cation channel involved in protection or tolerance from high temperature stress. Activated by temperatures above 40 degrees Celsius. More permeable to K(+) than to Na(+). May act in stress protection allow flies to survive in natural environments. The sequence is that of Transient receptor potential channel pyrexia (pyx) from Drosophila melanogaster (Fruit fly).